A 243-amino-acid polypeptide reads, in one-letter code: Transmembrane protein 174 (243 aa).

2 helical membrane-spanning segments follow: residues 40-60 (LLFS…MGWI) and 73-93 (LLGP…VCKF). Residues 205–229 (AGHDRPSSDADQLEGTQMGEEERVC) are disordered.

Interacts with SLC34A1; regulates SLC34A1 internalization by PTH and FGF23.

Its subcellular location is the endoplasmic reticulum membrane. It localises to the apical cell membrane. Functionally, regulator of plasma phosphate homeostasis. Decreases serum inorganic phosphate (Pi) uptake by regulating the sodium-phosphate cotransporter SLC34A1 trafficking by PTH and FGF23 in the kidney. The polypeptide is Transmembrane protein 174 (Tmem174) (Rattus norvegicus (Rat)).